Consider the following 97-residue polypeptide: Coiled-coil domain-containing protein 167 (97 aa).

Residues 10–79 (GVALEIDGLE…LRQENRKNML (70 aa)) are a coiled coil. A helical transmembrane segment spans residues 78 to 95 (MLLSVAIFILLTLVYAYW).

It is found in the membrane. The sequence is that of Coiled-coil domain-containing protein 167 (CCDC167) from Homo sapiens (Human).